Consider the following 339-residue polypeptide: Geranylgeranyl pyrophosphate synthase AN1592 (339 aa).

Isopentenyl diphosphate contacts are provided by Lys-41, Arg-44, and His-73. Residues Asp-80 and Asp-84 each contribute to the Mg(2+) site. Arg-89 lines the dimethylallyl diphosphate pocket. Arg-90 is an isopentenyl diphosphate binding site. The dimethylallyl diphosphate site is built by Lys-192, Thr-193, and Gln-228. Asp-231 is a Mg(2+) binding site. The dimethylallyl diphosphate site is built by Asn-235, Lys-245, and Lys-255.

Belongs to the FPP/GGPP synthase family. The cofactor is Mg(2+).

The catalysed reaction is isopentenyl diphosphate + dimethylallyl diphosphate = (2E)-geranyl diphosphate + diphosphate. It carries out the reaction isopentenyl diphosphate + (2E)-geranyl diphosphate = (2E,6E)-farnesyl diphosphate + diphosphate. The enzyme catalyses isopentenyl diphosphate + (2E,6E)-farnesyl diphosphate = (2E,6E,10E)-geranylgeranyl diphosphate + diphosphate. Its pathway is secondary metabolite biosynthesis. Functionally, geranylgeranyl pyrophosphate synthase; part of the gene cluster that mediates the biosynthesis of erinacines, cyathane-xylosides that show unique biological activities, including leishmanicidal activity, stimulating activity for nerve growth-factor synthesis, and agonistic activity toward the kappa opioid receptor. The geranylgeranyl diphosphate (GGPP) synthase eriE catalyzes the first step in erinacines biosynthesis via conversion of farnesyl pyrophosphate and isopentyl pyrophosphate into geranylgeranyl pyrophosphate (GGPP). GGPP is then substrate of the diterpene cyclase eriG for the production of cyatha-3,12-diene. The cytochrome P450 monooxygenase eriI then hydroxylates cyatha-3,12-diene at C-14 of the seven-membered ring to produce erinacol, which is further hydroxylated at C-15 by the cytochrome P450 monooxygenase eriC to yield cyathadiol. The cytochrome P450 monooxygenase eriA then catalyzes C-11 hydroxylation in the presence of the short chain dehydrogenase/reductase (SDR) eriH, which leads to the production of cyathatriol. The acetyltransferase eriL converts cyathatriol into 11-O-acetyl-cyathatriol. The SDR eriH catalyzes further oxidation of 11-O-acetyl-cyathatriol into 1-O-acetylcyathin A3. Finally, the glycosyl transferase eriJ tranfers xylose from UDP-xylose onto C-14 of 11-O-acetyl-cyathatriol to form eracine Q. EriJ is also able to convert 11-O-acetyl-cyathatriol to eracine Q2 by using UDP-D-glucose as cosubstrate, but at a lower rate. In the absence of eriL and eriJ, the SDR eriH is able to convert cyathatriol to cyathin A3; this is likely a switching mechanism in the biosynthesis of cyathins (C-14 ketogroup)and erinacines (C-14 glycosylated group). The roles of the SDR eriB, the polyprenyl transferase eriF and the dehydrogenase eriK have still to be identified. This Hericium erinaceus (Lion's mane mushroom) protein is Geranylgeranyl pyrophosphate synthase AN1592.